The following is a 468-amino-acid chain: Interstitial collagenase (468 aa).

An N-terminal signal peptide occupies residues 1–18; sequence MPGLPLLLLLLWGVGSHG. A propeptide spans 19–98 (activation peptide); that stretch reads FPAASETQEQ…PRCGVPDVAQ (80 aa). The short motif at 89-96 is the Cysteine switch element; it reads PRCGVPDV. Residue C91 coordinates Zn(2+). A glycan (N-linked (GlcNAc...) asparagine) is linked at N119. Residues D123 and D157 each coordinate Ca(2+). Positions 167 and 169 each coordinate Zn(2+). Residues D174, G175, E177, and Q179 each coordinate Ca(2+). H182 is a Zn(2+) binding site. Positions 189, 191, and 193 each coordinate Ca(2+). Zn(2+) is bound at residue H195. D197, E198, and D200 together coordinate Ca(2+). H217 serves as a coordination point for Zn(2+). E218 is an active-site residue. Residues H221 and H227 each contribute to the Zn(2+) site. Position 273 is a phosphothreonine (T273). Hemopexin repeat units follow at residues 274–323, 324–370, 373–421, and 422–465; these read PKVC…WPHL, PNGL…FGFP, VNHI…FPGI, and GNKV…WFNC. C277 and C465 are disulfide-bonded. 2 residues coordinate Ca(2+): D284 and Q328. Residue Y359 is modified to Phosphotyrosine; by PKDCC. Positions 377 and 426 each coordinate Ca(2+).

It belongs to the peptidase M10A family. The cofactor is Ca(2+). Requires Zn(2+) as cofactor. Post-translationally, tyrosine phosphorylated in platelets by PKDCC/VLK.

It is found in the secreted. Its subcellular location is the extracellular space. The protein resides in the extracellular matrix. It carries out the reaction Cleavage of the triple helix of collagen at about three-quarters of the length of the molecule from the N-terminus, at 775-Gly-|-Ile-776 in the alpha1(I) chain. Cleaves synthetic substrates and alpha-macroglobulins at bonds where P1' is a hydrophobic residue.. Its activity is regulated as follows. Can be activated without removal of the activation peptide. Functionally, cleaves collagens of types I, II, and III at one site in the helical domain. Also cleaves collagens of types VII and X. In Oryctolagus cuniculus (Rabbit), this protein is Interstitial collagenase (MMP1).